Here is a 109-residue protein sequence, read N- to C-terminus: Hainantoxin-XVIII-3 (109 aa).

The N-terminal stretch at 1–18 (MKLSIIIIATSLVIAVVA) is a signal peptide. Positions 19–46 (FPSKDSKAIENDKTEQRMEIVVQETARA) are excised as a propeptide. 4 disulfides stabilise this stretch: C47-C62, C55-C68, C59-C108, and C61-C81.

It belongs to the neurotoxin 25 family. F7 subfamily. Expressed by the venom gland.

Its subcellular location is the secreted. Putative ion channel inhibitor. This Cyriopagopus hainanus (Chinese bird spider) protein is Hainantoxin-XVIII-3.